The chain runs to 387 residues: Monopolar spindle protein 2 (387 aa).

Positions Asn-157–Arg-269 form a coiled coil. The interval Arg-216–Val-235 is disordered. Polar residues predominate over residues Asp-220–Pro-230. The helical transmembrane segment at Ile-311 to Ile-327 threads the bilayer.

Belongs to the MPS2 family. As to quaternary structure, interacts with BBP1, MPS3, and SPC24.

The protein localises to the nucleus membrane. The protein resides in the cytoplasm. It is found in the cytoskeleton. It localises to the microtubule organizing center. Its subcellular location is the spindle pole body. Functionally, component of the spindle pole body (SPB) required for insertion of the nascent SPB into the nuclear envelope and for the proper execution of spindle pole body (SPB) duplication. The sequence is that of Monopolar spindle protein 2 (MPS2) from Saccharomyces cerevisiae (strain RM11-1a) (Baker's yeast).